The chain runs to 993 residues: Type II inositol 1,4,5-trisphosphate 5-phosphatase (993 aa).

The 127-residue stretch at 22-148 (QGVLCKGDSR…PEFEWLSRHT (127 aa)) folds into the PH domain. 2 stretches are compositionally biased toward basic and acidic residues: residues 149 to 163 (CAEPDAESPKPREWN) and 294 to 303 (SKSDMSEKVR). Disordered regions lie at residues 149–191 (CAEP…GLED) and 236–304 (EALE…KVRS). The interval 342 to 668 (IQNFRFFVGT…LDKMENANIP (327 aa)) is 5-phosphatase. Positions 355 and 383 each coordinate Mg(2+). Residues glutamate 383, 459 to 460 (NK), 582 to 583 (YK), and 596 to 598 (KCR) contribute to the substrate site. Residues 669-782 (SVTLSKREFC…LSVSGNYLPS (114 aa)) are ASH. A Rho-GAP domain is found at 821–993 (SQLENPMEIP…FIHQFLCGPL (173 aa)). Cysteine methyl ester is present on cysteine 990. A lipid anchor (S-farnesyl cysteine) is attached at cysteine 990. Positions 991–993 (GPL) are cleaved as a propeptide — removed in mature form.

It belongs to the inositol 1,4,5-trisphosphate 5-phosphatase type II family. As to quaternary structure, interacts with APPL1, PHETA1 and PHETA2. Interacts with several Rab GTPases, at least RAB1A, RAB2A, RAB5A, RAB6A, RAB8A, RAB9A and RAB33B; these interactions may play a dual role in targeting INPP5B to the specific membranes and stimulating its phosphatase activity. Interacts preferentially with non-phosphorylated RAB8A; phosphorylation of RAB8A on 'Thr-72' disrupts this interaction. Interacts with INPP5F. In terms of processing, isoprenylation at Cys-990 may be required for localization at the membrane. May be proteolytically cleaved after Lys-320 as inferred from N-terminal protein sequence of the 75 kda form. As to expression, detected in kidney, liver, brain, lung and testis (at protein level). Detected in kidney and liver, and at lower levels in brain, lung and testis.

It localises to the cytoplasm. The protein localises to the cytosol. The protein resides in the endoplasmic reticulum-Golgi intermediate compartment. Its subcellular location is the early endosome membrane. It is found in the membrane. It localises to the cytoplasmic vesicle. The protein localises to the phagosome membrane. It catalyses the reaction a 1,2-diacyl-sn-glycero-3-phospho-(1D-myo-inositol-4,5-bisphosphate) + H2O = a 1,2-diacyl-sn-glycero-3-phospho-(1D-myo-inositol 4-phosphate) + phosphate. Hydrolyzes phosphatidylinositol 4,5-bisphosphate (PtIns(4,5)P2) and the signaling molecule phosphatidylinositol 1,4,5-trisphosphate (PtIns(1,4,5)P3), and thereby modulates cellular signaling events. This chain is Type II inositol 1,4,5-trisphosphate 5-phosphatase (Inpp5b), found in Mus musculus (Mouse).